A 103-amino-acid chain; its full sequence is Histone H4 (103 aa).

Over residues 1 to 14 (MSGRGKGGKGLGKG) the composition is skewed to gly residues. The segment at 1 to 20 (MSGRGKGGKGLGKGGAKRHR) is disordered. Position 6 is an N6-acetyl-N6-methyllysine; alternate (lysine 6). Lysine 6, lysine 9, and lysine 13 each carry N6-acetyllysine; alternate. Residues lysine 6, lysine 9, and lysine 13 each carry the N6-methyllysine; alternate modification. 2 positions are modified to N6-butyryllysine; alternate: lysine 9 and lysine 13. Lysine 13 carries the post-translational modification N6-acetyl-N6-methyllysine; alternate. Residue lysine 17 is modified to N6-acetyllysine. Residues 17-21 (KRHRK) mediate DNA binding. At lysine 32 the chain carries N6-succinyllysine. At arginine 56 the chain carries Omega-N-methylarginine. Residues serine 61 and serine 65 each carry the phosphoserine modification. At lysine 78 the chain carries N6-succinyllysine. Lysine 80 carries the post-translational modification N6-acetyllysine. An N6-glutaryllysine modification is found at lysine 92.

It belongs to the histone H4 family. In terms of assembly, the nucleosome is a histone octamer containing two molecules each of H2A, H2B, H3 and H4 assembled in one H3-H4 heterotetramer and two H2A-H2B heterodimers. The octamer wraps approximately 147 bp of DNA. Histone H4 is a component of the UAF (upstream activation factor) complex which consists of UAF30, RRN5, RRN9, RRN10, and histones H3 and H4. In terms of processing, glutarylation at Lys-92 (H4K91glu) destabilizes nucleosomes by promoting dissociation of the H2A-H2B dimers from nucleosomes.

It localises to the nucleus. The protein resides in the chromosome. Functionally, core component of nucleosome. Nucleosomes wrap and compact DNA into chromatin, limiting DNA accessibility to the cellular machineries which require DNA as a template. Histones thereby play a central role in transcription regulation, DNA repair, DNA replication and chromosomal stability. DNA accessibility is regulated via a complex set of post-translational modifications of histones, also called histone code, and nucleosome remodeling. Component of the UAF (upstream activation factor) complex which interacts with the upstream element of the RNA polymerase I promoter and forms a stable preinitiation complex. Together with SPT15/TBP UAF seems to stimulate basal transcription to a fully activated level. The polypeptide is Histone H4 (HHF1) (Saccharomyces cerevisiae (strain ATCC 204508 / S288c) (Baker's yeast)).